A 321-amino-acid polypeptide reads, in one-letter code: Calcium-binding protein LPS1-alpha (321 aa).

8 EF-hand domains span residues 15 to 49 (DAIE…NWTE), 47 to 82 (WTEE…STKE), 85 to 120 (YSSD…IYTK), 121 to 156 (VVDG…KLPI), 165 to 200 (EYRE…STKY), 200 to 233 (YSDK…DGVS), 232 to 267 (VSKD…IYRQ), and 269 to 304 (VDFE…NCPY). Residues D29, N31, D33, T35, E40, D60, N62, D64, H66, E71, D98, D100, N102, R104, E109, D134, D136, D138, H140, E145, D178, N180, D182, S184, E189, D213, N215, D217, R219, E224, D245, D247, N249, K251, E256, D284, D286, Y288, and E293 each coordinate Ca(2+).

In terms of tissue distribution, aboral ectoderm, a squamous epithelium covering the surface of the late stage embryo and larva.

Its function is as follows. Calcium-binding protein involved in larval development and metamorphosis. Likely to function as calcium buffers mediating the transport of calcium from the sea water to the blastocoel where calcium is required for skeleton formation. This chain is Calcium-binding protein LPS1-alpha, found in Lytechinus pictus (Painted sea urchin).